Here is a 151-residue protein sequence, read N- to C-terminus: uncharacterized protein (151 aa).

This sequence to B.subtilis pcf and to sigma factors.

This is an uncharacterized protein from Bacillus subtilis (strain 168).